The following is a 525-amino-acid chain: Probable pectinesterase/pectinesterase inhibitor 44 (525 aa).

Positions 1–19 (MSCLKYFLILLMLGLCVSS) are cleaved as a signal peptide. Residues 30 to 153 (VPASEFVSSI…YSMLRELLPL (124 aa)) form a pectinesterase inhibitor 44 region. Residue Asn-98 is glycosylated (N-linked (GlcNAc...) asparagine). Residues 157 to 192 (EQKPKAVSKPGPIAKGPKAPPGRKLRDTDEDESLQF) are disordered. The segment at 212–509 (DVSVALDGTG…FTVSQFIKGN (298 aa)) is pectinesterase 44. Residues Asn-222 and Asn-278 are each glycosylated (N-linked (GlcNAc...) asparagine). Residues Thr-287 and Gln-317 each coordinate substrate. The active-site Proton donor; for pectinesterase activity is the Asp-340. A disulfide bridge connects residues Cys-354 and Cys-374. Asp-361 (nucleophile; for pectinesterase activity) is an active-site residue. N-linked (GlcNAc...) asparagine glycans are attached at residues Asn-409 and Asn-421. Positions 429 and 431 each coordinate substrate. N-linked (GlcNAc...) asparagine glycosylation is found at Asn-443, Asn-492, and Asn-499.

It in the N-terminal section; belongs to the PMEI family. The protein in the C-terminal section; belongs to the pectinesterase family. Expressed in siliques.

The protein localises to the secreted. It localises to the cell wall. It carries out the reaction [(1-&gt;4)-alpha-D-galacturonosyl methyl ester](n) + n H2O = [(1-&gt;4)-alpha-D-galacturonosyl](n) + n methanol + n H(+). It functions in the pathway glycan metabolism; pectin degradation; 2-dehydro-3-deoxy-D-gluconate from pectin: step 1/5. In terms of biological role, acts in the modification of cell walls via demethylesterification of cell wall pectin. In Arabidopsis thaliana (Mouse-ear cress), this protein is Probable pectinesterase/pectinesterase inhibitor 44 (PME44).